A 436-amino-acid polypeptide reads, in one-letter code: Serine/threonine-protein kinase STK11 (436 aa).

Ser-31 bears the Phosphoserine mark. Residues Lys-44 and Lys-48 each carry the N6-acetyllysine modification. The segment at 45-90 (LIGKYLMGDLLGEGSYGKVKEVLDSETLCRRAVKILKKKKLRRIPN) is sufficient for interaction with SIRT1. The 261-residue stretch at 49–309 (YLMGDLLGEG…IRQIRQHSWF (261 aa)) folds into the Protein kinase domain. Residues 55–63 (LGEGSYGKV) and Lys-78 contribute to the ATP site. Residues Lys-96 and Lys-97 each carry the N6-acetyllysine modification. Asp-176 acts as the Proton acceptor in catalysis. At Thr-189 the chain carries Phosphothreonine; by autocatalysis. Lys-296 and Lys-311 each carry N6-acetyllysine. A Phosphoserine modification is found at Ser-325. Phosphothreonine; by autocatalysis is present on Thr-336. Phosphothreonine; by ATM and autocatalysis is present on Thr-366. The disordered stretch occupies residues 397–421 (GTEPQLSSKVKPEGRPGAANPARKV). At Ser-403 the chain carries Phosphoserine. At Lys-420 the chain carries N6-acetyllysine. Residue Cys-422 is the site of S-palmitoyl cysteine attachment. Lys-426 carries the N6-acetyllysine modification. Position 431 is a phosphoserine; by autocatalysis, PKA, PKC/PRKCZ and RPS6KA1 (Ser-431). A Cysteine methyl ester modification is found at Cys-433. Cys-433 carries S-farnesyl cysteine lipidation. Lys-434 carries the post-translational modification N6-acetyllysine. Residues 434 to 436 (KQQ) constitute a propeptide, removed in mature form.

This sequence belongs to the protein kinase superfamily. CAMK Ser/Thr protein kinase family. LKB1 subfamily. As to quaternary structure, catalytic component of a trimeric complex composed of STK11/LKB1, STRAD (STRADA or STRADB) and CAB39/MO25 (CAB39/MO25alpha or CAB39L/MO25beta): the complex tethers STK11/LKB1 in the cytoplasm and stimulates its catalytic activity. Found in a ternary complex composed of SMAD4, STK11/LKB1 and STK11IP. Interacts with NR4A1, p53/TP53, SMAD4, STK11IP and WDR6. Interacts with NISCH; this interaction may increase STK11 activity. Interacts with SIRT1; the interaction deacetylates STK11. Interacts with CDKN1A. Mg(2+) serves as cofactor. It depends on Mn(2+) as a cofactor. Phosphorylated by ATM at Thr-366 following ionizing radiation (IR). Phosphorylation at Ser-431 by RPS6KA1 and/or some PKA is required to inhibit cell growth. Phosphorylation at Ser-431 is also required during neuronal polarization to mediate phosphorylation of BRSK1 and BRSK2. Phosphorylation by PKC/PRKCZ at Ser-397 in isoform 2 promotes metformin (or peroxynitrite)-induced nuclear export of STK11 and activation of AMPK. UV radiation -induced phosphorylation at Thr-366 mediates CDKN1A degradation. Post-translationally, acetylated. Deacetylation at Lys-48 enhances cytoplasmic localization and kinase activity in vitro. In terms of tissue distribution, expressed in brain, heart, testis, skeletal muscle and spleen, and weakly in liver and kidney. Isoform 1 is expressed at highest levels in the brain. Isoform 2 is expressed at highest levels in the testis, primarily in postmitotic developing germ cells (at protein level).

It localises to the nucleus. The protein resides in the cytoplasm. The protein localises to the membrane. Its subcellular location is the mitochondrion. The catalysed reaction is L-seryl-[protein] + ATP = O-phospho-L-seryl-[protein] + ADP + H(+). It catalyses the reaction L-threonyl-[protein] + ATP = O-phospho-L-threonyl-[protein] + ADP + H(+). Its activity is regulated as follows. Activated by forming a complex with STRAD (STRADA or STRADB) and CAB39/MO25 (CAB39/MO25alpha or CAB39L/MO25beta): STRADA (or STRADB)-binding promotes a conformational change of STK11/LKB1 in an active conformation, which is stabilized by CAB39/MO25alpha (or CAB39L/MO25beta) interacting with the STK11/LKB1 activation loop. Sequestration in the nucleus by NR4A1 prevents it from phosphorylating and activating cytoplasmic AMPK. In terms of biological role, tumor suppressor serine/threonine-protein kinase that controls the activity of AMP-activated protein kinase (AMPK) family members, thereby playing a role in various processes such as cell metabolism, cell polarity, apoptosis and DNA damage response. Acts by phosphorylating the T-loop of AMPK family proteins, thus promoting their activity: phosphorylates PRKAA1, PRKAA2, BRSK1, BRSK2, MARK1, MARK2, MARK3, MARK4, NUAK1, NUAK2, SIK1, SIK2, SIK3 and SNRK but not MELK. Also phosphorylates non-AMPK family proteins such as STRADA, PTEN and possibly p53/TP53. Acts as a key upstream regulator of AMPK by mediating phosphorylation and activation of AMPK catalytic subunits PRKAA1 and PRKAA2 and thereby regulates processes including: inhibition of signaling pathways that promote cell growth and proliferation when energy levels are low, glucose homeostasis in liver, activation of autophagy when cells undergo nutrient deprivation, and B-cell differentiation in the germinal center in response to DNA damage. Also acts as a regulator of cellular polarity by remodeling the actin cytoskeleton. Required for cortical neuron polarization by mediating phosphorylation and activation of BRSK1 and BRSK2, leading to axon initiation and specification. Involved in DNA damage response: interacts with p53/TP53 and recruited to the CDKN1A/WAF1 promoter to participate in transcription activation. Able to phosphorylate p53/TP53; the relevance of such result in vivo is however unclear and phosphorylation may be indirect and mediated by downstream STK11/LKB1 kinase NUAK1. Also acts as a mediator of p53/TP53-dependent apoptosis via interaction with p53/TP53: translocates to the mitochondrion during apoptosis and regulates p53/TP53-dependent apoptosis pathways. Regulates UV radiation-induced DNA damage response mediated by CDKN1A. In association with NUAK1, phosphorylates CDKN1A in response to UV radiation and contributes to its degradation which is necessary for optimal DNA repair. Functionally, has a role in spermiogenesis. This is Serine/threonine-protein kinase STK11 from Rattus norvegicus (Rat).